The primary structure comprises 32 residues: Photosystem II reaction center protein T (32 aa).

A helical transmembrane segment spans residues 3-23; it reads AFAYVLILTLAVVTLFFAVAF.

This sequence belongs to the PsbT family. In terms of assembly, PSII is composed of 1 copy each of membrane proteins PsbA, PsbB, PsbC, PsbD, PsbE, PsbF, PsbH, PsbI, PsbJ, PsbK, PsbL, PsbM, PsbT, PsbX, PsbY, Psb30/Ycf12, peripheral proteins PsbO, CyanoQ (PsbQ), PsbU, PsbV and a large number of cofactors. It forms dimeric complexes.

The protein localises to the cellular thylakoid membrane. In terms of biological role, found at the monomer-monomer interface of the photosystem II (PS II) dimer, plays a role in assembly and dimerization of PSII. PSII is a light-driven water plastoquinone oxidoreductase, using light energy to abstract electrons from H(2)O, generating a proton gradient subsequently used for ATP formation. This is Photosystem II reaction center protein T from Prochlorococcus marinus (strain MIT 9301).